A 344-amino-acid polypeptide reads, in one-letter code: tRNA N6-adenosine threonylcarbamoyltransferase (344 aa).

2 residues coordinate Fe cation: histidine 112 and histidine 116. Substrate-binding positions include leucine 135–glycine 139, aspartate 168, glycine 181, and asparagine 271. Aspartate 299 serves as a coordination point for Fe cation. Residues arginine 323–alanine 344 form a disordered region.

This sequence belongs to the KAE1 / TsaD family. The cofactor is Fe(2+).

The protein resides in the cytoplasm. It carries out the reaction L-threonylcarbamoyladenylate + adenosine(37) in tRNA = N(6)-L-threonylcarbamoyladenosine(37) in tRNA + AMP + H(+). Its function is as follows. Required for the formation of a threonylcarbamoyl group on adenosine at position 37 (t(6)A37) in tRNAs that read codons beginning with adenine. Is involved in the transfer of the threonylcarbamoyl moiety of threonylcarbamoyl-AMP (TC-AMP) to the N6 group of A37, together with TsaE and TsaB. TsaD likely plays a direct catalytic role in this reaction. This chain is tRNA N6-adenosine threonylcarbamoyltransferase, found in Erythrobacter litoralis (strain HTCC2594).